The primary structure comprises 359 residues: N-acetyl-gamma-glutamyl-phosphate reductase (359 aa).

C162 is an active-site residue.

It belongs to the NAGSA dehydrogenase family. Type 1 subfamily.

Its subcellular location is the cytoplasm. The enzyme catalyses N-acetyl-L-glutamate 5-semialdehyde + phosphate + NADP(+) = N-acetyl-L-glutamyl 5-phosphate + NADPH + H(+). Its pathway is amino-acid biosynthesis; L-arginine biosynthesis; N(2)-acetyl-L-ornithine from L-glutamate: step 3/4. Its function is as follows. Catalyzes the NADPH-dependent reduction of N-acetyl-5-glutamyl phosphate to yield N-acetyl-L-glutamate 5-semialdehyde. The sequence is that of N-acetyl-gamma-glutamyl-phosphate reductase from Prochlorococcus marinus (strain NATL2A).